The primary structure comprises 254 residues: tRNA (guanine-N(1)-)-methyltransferase (254 aa).

S-adenosyl-L-methionine-binding positions include Gly-117 and 136-141 (LGDFVL).

It belongs to the RNA methyltransferase TrmD family. Homodimer.

The protein resides in the cytoplasm. It carries out the reaction guanosine(37) in tRNA + S-adenosyl-L-methionine = N(1)-methylguanosine(37) in tRNA + S-adenosyl-L-homocysteine + H(+). Specifically methylates guanosine-37 in various tRNAs. The sequence is that of tRNA (guanine-N(1)-)-methyltransferase from Levilactobacillus brevis (strain ATCC 367 / BCRC 12310 / CIP 105137 / JCM 1170 / LMG 11437 / NCIMB 947 / NCTC 947) (Lactobacillus brevis).